We begin with the raw amino-acid sequence, 396 residues long: Elongation factor Tu (396 aa).

The region spanning 10 to 205 (KEHVNIGTIG…AVDNYIETPV (196 aa)) is the tr-type G domain. The tract at residues 19–26 (GHVDHGKT) is G1. 19-26 (GHVDHGKT) lines the GTP pocket. Position 26 (threonine 26) interacts with Mg(2+). The segment at 60-64 (GITIN) is G2. Positions 81–84 (DCPG) are G3. Residues 81–85 (DCPGH) and 136–139 (NKVD) contribute to the GTP site. Residues 136–139 (NKVD) are G4. Positions 175 to 177 (SAL) are G5.

Belongs to the TRAFAC class translation factor GTPase superfamily. Classic translation factor GTPase family. EF-Tu/EF-1A subfamily. As to quaternary structure, monomer.

The protein localises to the cytoplasm. It carries out the reaction GTP + H2O = GDP + phosphate + H(+). In terms of biological role, GTP hydrolase that promotes the GTP-dependent binding of aminoacyl-tRNA to the A-site of ribosomes during protein biosynthesis. This Mycoplasmopsis pulmonis (strain UAB CTIP) (Mycoplasma pulmonis) protein is Elongation factor Tu.